Consider the following 1093-residue polypeptide: Protein transport protein Sec24A (1093 aa).

Disordered regions lie at residues M1–P29, H60–T168, G189–P226, and S294–P328. 2 stretches are compositionally biased toward polar residues: residues A112 to F126 and W138 to T168. Pro residues-rich tracts occupy residues S191–P201 and P209–V221. Positions Y299–P328 are enriched in polar residues. The Zn(2+) site is built by C431, C434, C452, and C455. A zinc finger-like region spans residues C431–C455. Residues P966–F1038 form a Gelsolin-like repeat.

Belongs to the SEC23/SEC24 family. SEC24 subfamily. In terms of assembly, COPII is composed of at least five proteins: the Sec23/24 complex, the Sec13/31 complex and Sar1. Interacts with TMED2. Interacts (as part of the Sec23/24 complex) with SEC22B; recruits SEC22B into COPII-coated vesicles for its transport from the endoplasmic reticulum to the Golgi. Interacts with STING1; promoting STING1 translocation to COPII vesicles in a STEEP1-dependent manner. Interacts with TMEM39A. Interacts with SACM1L; this interaction is reduced in the absence of TMEM39A. Interacts with kinase FAM20C; transport of FAM20C from the endoplasmic reticulum to the Golgi is likely to be mediated by COPII vesicles.

The protein resides in the cytoplasmic vesicle. The protein localises to the COPII-coated vesicle membrane. It is found in the endoplasmic reticulum membrane. It localises to the cytoplasm. Its subcellular location is the cytosol. Its function is as follows. Component of the coat protein complex II (COPII) which promotes the formation of transport vesicles from the endoplasmic reticulum (ER). The coat has two main functions, the physical deformation of the endoplasmic reticulum membrane into vesicles and the selection of cargo molecules for their transport to the Golgi complex. Plays a central role in cargo selection within the COPII complex and together with SEC24B may have a different specificity compared to SEC24C and SEC24D. May package preferentially cargos with cytoplasmic DxE or LxxLE motifs and may also recognize conformational epitopes. The sequence is that of Protein transport protein Sec24A from Homo sapiens (Human).